A 177-amino-acid polypeptide reads, in one-letter code: Large ribosomal subunit protein uL6 (177 aa).

Belongs to the universal ribosomal protein uL6 family. In terms of assembly, part of the 50S ribosomal subunit.

This protein binds to the 23S rRNA, and is important in its secondary structure. It is located near the subunit interface in the base of the L7/L12 stalk, and near the tRNA binding site of the peptidyltransferase center. This Pseudomonas syringae pv. syringae (strain B728a) protein is Large ribosomal subunit protein uL6.